A 344-amino-acid polypeptide reads, in one-letter code: Methionine import ATP-binding protein MetN (344 aa).

The 240-residue stretch at 2-241 folds into the ABC transporter domain; that stretch reads IEINQVNKVF…PKTELAHDFI (240 aa). 38 to 45 contacts ATP; sequence GSSGAGKS.

This sequence belongs to the ABC transporter superfamily. Methionine importer (TC 3.A.1.24) family. As to quaternary structure, the complex is composed of two ATP-binding proteins (MetN), two transmembrane proteins (MetI) and a solute-binding protein (MetQ).

The protein localises to the cell inner membrane. The enzyme catalyses L-methionine(out) + ATP + H2O = L-methionine(in) + ADP + phosphate + H(+). It catalyses the reaction D-methionine(out) + ATP + H2O = D-methionine(in) + ADP + phosphate + H(+). Part of the ABC transporter complex MetNIQ involved in methionine import. Responsible for energy coupling to the transport system. This Vibrio vulnificus (strain CMCP6) protein is Methionine import ATP-binding protein MetN.